A 567-amino-acid polypeptide reads, in one-letter code: Proline--tRNA ligase (567 aa).

It belongs to the class-II aminoacyl-tRNA synthetase family. ProS type 1 subfamily. In terms of assembly, homodimer.

The protein resides in the cytoplasm. The catalysed reaction is tRNA(Pro) + L-proline + ATP = L-prolyl-tRNA(Pro) + AMP + diphosphate. Its function is as follows. Catalyzes the attachment of proline to tRNA(Pro) in a two-step reaction: proline is first activated by ATP to form Pro-AMP and then transferred to the acceptor end of tRNA(Pro). As ProRS can inadvertently accommodate and process non-cognate amino acids such as alanine and cysteine, to avoid such errors it has two additional distinct editing activities against alanine. One activity is designated as 'pretransfer' editing and involves the tRNA(Pro)-independent hydrolysis of activated Ala-AMP. The other activity is designated 'posttransfer' editing and involves deacylation of mischarged Ala-tRNA(Pro). The misacylated Cys-tRNA(Pro) is not edited by ProRS. The protein is Proline--tRNA ligase of Stenotrophomonas maltophilia (strain K279a).